A 221-amino-acid polypeptide reads, in one-letter code: Small ribosomal subunit protein uS5 (221 aa).

An S5 DRBM domain is found at 46–109 (IKDEVIDIKR…INAKLNIMEI (64 aa)).

Belongs to the universal ribosomal protein uS5 family. Part of the 30S ribosomal subunit. Contacts protein S4.

Its function is as follows. With S4 and S12 plays an important role in translational accuracy. In Thermoplasma volcanium (strain ATCC 51530 / DSM 4299 / JCM 9571 / NBRC 15438 / GSS1), this protein is Small ribosomal subunit protein uS5.